Consider the following 346-residue polypeptide: Melanoma-associated antigen B3 (346 aa).

The disordered stretch occupies residues methionine 1–lysine 35. Over residues threonine 18–threonine 33 the composition is skewed to polar residues. An MAGE domain is found at leucine 111 to alanine 310.

Expressed in testis.

In Homo sapiens (Human), this protein is Melanoma-associated antigen B3 (MAGEB3).